Here is a 149-residue protein sequence, read N- to C-terminus: Ribonuclease H (149 aa).

Positions methionine 1–alanine 142 constitute an RNase H type-1 domain. Mg(2+)-binding residues include aspartate 9, glutamate 47, aspartate 70, and aspartate 134. The disordered stretch occupies residues histidine 124–proline 149. Over residues glycine 129–proline 149 the composition is skewed to basic and acidic residues.

It belongs to the RNase H family. Monomer. The cofactor is Mg(2+).

It localises to the cytoplasm. It carries out the reaction Endonucleolytic cleavage to 5'-phosphomonoester.. In terms of biological role, endonuclease that specifically degrades the RNA of RNA-DNA hybrids. This chain is Ribonuclease H, found in Maricaulis maris (strain MCS10) (Caulobacter maris).